The sequence spans 274 residues: Putative pyruvate, phosphate dikinase regulatory protein (274 aa).

153-160 serves as a coordination point for ADP; the sequence is GISRTSKT.

Belongs to the pyruvate, phosphate/water dikinase regulatory protein family. PDRP subfamily.

It catalyses the reaction N(tele)-phospho-L-histidyl/L-threonyl-[pyruvate, phosphate dikinase] + ADP = N(tele)-phospho-L-histidyl/O-phospho-L-threonyl-[pyruvate, phosphate dikinase] + AMP + H(+). It carries out the reaction N(tele)-phospho-L-histidyl/O-phospho-L-threonyl-[pyruvate, phosphate dikinase] + phosphate + H(+) = N(tele)-phospho-L-histidyl/L-threonyl-[pyruvate, phosphate dikinase] + diphosphate. Bifunctional serine/threonine kinase and phosphorylase involved in the regulation of the pyruvate, phosphate dikinase (PPDK) by catalyzing its phosphorylation/dephosphorylation. This is Putative pyruvate, phosphate dikinase regulatory protein from Bartonella tribocorum (strain CIP 105476 / IBS 506).